The sequence spans 257 residues: Major prion protein (257 aa).

Positions 1 to 24 are cleaved as a signal peptide; it reads MVKSHIGGWILLLFVATWSDVGLC. The interval 25 to 234 is interaction with GRB2, ERI3 and SYN1; the sequence is KKRPKPGGWN…ESEAYYQRGA (210 aa). The segment at 28–110 is disordered; sequence PKPGGWNTGG…GQWGKPNKPK (83 aa). Gly residues-rich tracts occupy residues 33 to 48 and 55 to 101; these read WNTG…GSPG and QGGG…GSHG. Repeat copies occupy residues 54–62, 63–70, 71–78, 79–86, and 87–95. Residues 54–95 are 5 X 8 AA tandem repeats of P-H-G-G-G-W-G-Q; sequence PQGGGGWGQPHGGGWGQPHGGGWGQPHGGGWGQPHGGGGWGQ. 12 residues coordinate Cu(2+): His-64, Gly-65, Gly-66, His-72, Gly-73, Gly-74, His-80, Gly-81, Gly-82, His-88, Gly-90, and Gly-91. A disulfide bridge connects residues Cys-183 and Cys-218. N-linked (GlcNAc...) asparagine glycosylation is found at Asn-185 and Asn-201. A lipid anchor (GPI-anchor amidated alanine) is attached at Ala-234. Positions 235 to 257 are cleaved as a propeptide — removed in mature form; sequence SAILFSPPPVILLISLLILLIVG.

This sequence belongs to the prion family. In terms of assembly, monomer and homodimer. Has a tendency to aggregate into amyloid fibrils containing a cross-beta spine, formed by a steric zipper of superposed beta-strands. Soluble oligomers may represent an intermediate stage on the path to fibril formation. Copper binding may promote oligomerization. Interacts with GRB2, APP, ERI3/PRNPIP and SYN1. Mislocalized cytosolically exposed PrP interacts with MGRN1; this interaction alters MGRN1 subcellular location and causes lysosomal enlargement. Interacts with KIAA1191.

Its subcellular location is the cell membrane. It localises to the golgi apparatus. Functionally, its primary physiological function is unclear. Has cytoprotective activity against internal or environmental stresses. May play a role in neuronal development and synaptic plasticity. May be required for neuronal myelin sheath maintenance. May play a role in iron uptake and iron homeostasis. Soluble oligomers are toxic to cultured neuroblastoma cells and induce apoptosis (in vitro). Association with GPC1 (via its heparan sulfate chains) targets PRNP to lipid rafts. Also provides Cu(2+) or Zn(2+) for the ascorbate-mediated GPC1 deaminase degradation of its heparan sulfate side chains. This Vulpes lagopus (Arctic fox) protein is Major prion protein.